The following is a 506-amino-acid chain: Histidine ammonia-lyase (506 aa).

Positions 143–145 form a cross-link, 5-imidazolinone (Ala-Gly); sequence ASG. Serine 144 is subject to 2,3-didehydroalanine (Ser).

It belongs to the PAL/histidase family. Post-translationally, contains an active site 4-methylidene-imidazol-5-one (MIO), which is formed autocatalytically by cyclization and dehydration of residues Ala-Ser-Gly.

The protein resides in the cytoplasm. The enzyme catalyses L-histidine = trans-urocanate + NH4(+). Its pathway is amino-acid degradation; L-histidine degradation into L-glutamate; N-formimidoyl-L-glutamate from L-histidine: step 1/3. This chain is Histidine ammonia-lyase, found in Salmonella typhimurium (strain LT2 / SGSC1412 / ATCC 700720).